A 457-amino-acid chain; its full sequence is Adenylosuccinate synthetase (457 aa).

GTP is bound by residues 40–46 (GDEGKGK) and 70–72 (GHT). The Proton acceptor role is filled by D41. 2 residues coordinate Mg(2+): D41 and G70. Residues 41–44 (DEGK), 68–71 (NAGH), T161, R175, N255, T270, and R334 contribute to the IMP site. Catalysis depends on H71, which acts as the Proton donor. 330–336 (VTTGRKR) serves as a coordination point for substrate. GTP is bound by residues R336, 362–364 (KLD), and 444–446 (GVG).

This sequence belongs to the adenylosuccinate synthetase family. In terms of assembly, homodimer. Mg(2+) is required as a cofactor.

Its subcellular location is the cytoplasm. It carries out the reaction IMP + L-aspartate + GTP = N(6)-(1,2-dicarboxyethyl)-AMP + GDP + phosphate + 2 H(+). Its pathway is purine metabolism; AMP biosynthesis via de novo pathway; AMP from IMP: step 1/2. In terms of biological role, plays an important role in the de novo pathway and in the salvage pathway of purine nucleotide biosynthesis. Catalyzes the first committed step in the biosynthesis of AMP from IMP. The chain is Adenylosuccinate synthetase from Caenorhabditis elegans.